Here is a 188-residue protein sequence, read N- to C-terminus: F7-2 fimbrial protein (188 aa).

A signal peptide spans methionine 1–alanine 21. The cysteines at positions 43 and 82 are disulfide-linked.

Belongs to the fimbrial protein family.

It localises to the fimbrium. Fimbriae (also called pili), polar filaments radiating from the surface of the bacterium to a length of 0.5-1.5 micrometers and numbering 100-300 per cell, enable bacteria to colonize the epithelium of specific host organs. In Escherichia coli O6:H1 (strain CFT073 / ATCC 700928 / UPEC), this protein is F7-2 fimbrial protein (F7-2).